Consider the following 358-residue polypeptide: MTYNLKKYIRTDLEDFDGYSACKAPELVKTSKQIIKLDANENLYGAAPTVRQAMSEFNQYHIYPDATQSEIRRLLSEYTGVAVEQIVCGAGSDQLIDLLLRLFINPGDEVINCPPTFAMYKFYTELNRGKIVNVPRDASYNINIAAINNAITPQTKLIFIAAPNNPTGTAISKEEIRQILDLGVPTVVDEAYYEFTGQTMVSDMSKYPNLMILRTFSKWAGLAGLRVGYGLFPPIIADYLSRIKDPYSVNIAADAAVRQTMLQREYMLETVKKIVNERQRLYTELSKFGWLKPYPSVANFILCKLLKGKAKEVQHELESKGILVRCFDAPMMENCLRFSVGKPEDTDGLLKALGEMGE.

The residue at position 218 (lysine 218) is an N6-(pyridoxal phosphate)lysine.

It belongs to the class-II pyridoxal-phosphate-dependent aminotransferase family. Histidinol-phosphate aminotransferase subfamily. As to quaternary structure, homodimer. The cofactor is pyridoxal 5'-phosphate.

It catalyses the reaction L-histidinol phosphate + 2-oxoglutarate = 3-(imidazol-4-yl)-2-oxopropyl phosphate + L-glutamate. It participates in amino-acid biosynthesis; L-histidine biosynthesis; L-histidine from 5-phospho-alpha-D-ribose 1-diphosphate: step 7/9. This is Histidinol-phosphate aminotransferase from Dehalococcoides mccartyi (strain ATCC BAA-2100 / JCM 16839 / KCTC 5957 / BAV1).